The following is a 241-amino-acid chain: Large ribosomal subunit protein uL3 (241 aa).

Disordered regions lie at residues 139-166 (VSHR…PGHM) and 214-241 (ADAP…QEGA). An N5-methylglutamine modification is found at glutamine 151. A compositionally biased stretch (low complexity) spans 229-241 (AAAEAPAAEQEGA).

Part of the 50S ribosomal subunit. Forms a cluster with proteins L14 and L19. In terms of processing, methylated, on either Lys-155 or Lys-158. Post-translationally, methylated by PrmB.

In terms of biological role, one of the primary rRNA binding proteins, it binds directly near the 3'-end of the 23S rRNA, where it nucleates assembly of the 50S subunit. This is Large ribosomal subunit protein uL3 from Rhodopseudomonas palustris (strain ATCC BAA-98 / CGA009).